A 309-amino-acid polypeptide reads, in one-letter code: Ribose-phosphate pyrophosphokinase (309 aa).

Residues 37–39 and 96–97 each bind ATP; these read DGE and RQ. Mg(2+) contacts are provided by His-130 and Asp-169. Lys-192 is a catalytic residue. D-ribose 5-phosphate-binding positions include Arg-194, Asp-218, and 222–226; that span reads DTAGT.

It belongs to the ribose-phosphate pyrophosphokinase family. Class I subfamily. Homohexamer. It depends on Mg(2+) as a cofactor.

The protein resides in the cytoplasm. The enzyme catalyses D-ribose 5-phosphate + ATP = 5-phospho-alpha-D-ribose 1-diphosphate + AMP + H(+). The protein operates within metabolic intermediate biosynthesis; 5-phospho-alpha-D-ribose 1-diphosphate biosynthesis; 5-phospho-alpha-D-ribose 1-diphosphate from D-ribose 5-phosphate (route I): step 1/1. Functionally, involved in the biosynthesis of the central metabolite phospho-alpha-D-ribosyl-1-pyrophosphate (PRPP) via the transfer of pyrophosphoryl group from ATP to 1-hydroxyl of ribose-5-phosphate (Rib-5-P). This is Ribose-phosphate pyrophosphokinase from Campylobacter jejuni subsp. jejuni serotype O:2 (strain ATCC 700819 / NCTC 11168).